The chain runs to 560 residues: uncharacterized protein (560 aa).

Residues 1-281 enclose the ABC transmembrane type-1 domain; the sequence is MLWNWVALVG…LGSFFHVAMN (281 aa). 7 helical membrane-spanning segments follow: residues 2-22, 32-52, 108-128, 138-160, 168-188, 223-243, and 249-269; these read LWNWVALVGGIISAVVFSYIL, LLSAVILGIVLIAALALRAFA, IYFGRYLPQLFYSLLAPLTLF, TAIILLICVPLIPMSIIAVNKIA, WSIYVGLGSSFLDNLQGLITL, VSLMDLLAYGGAAIGILTALL, and QLSVLGVILFILLSSEFFIPL. The ABC transporter domain maps to 314-547; it reads VEIKDLHFSY…QGAYAEMFQQ (234 aa). 347-354 serves as a coordination point for ATP; it reads GKSGCGKS.

Belongs to the ABC transporter superfamily.

Its subcellular location is the cell inner membrane. This is an uncharacterized protein from Haemophilus influenzae (strain ATCC 51907 / DSM 11121 / KW20 / Rd).